A 92-amino-acid polypeptide reads, in one-letter code: Neuropeptide F (92 aa).

Residues 1–27 form the signal peptide; sequence MSQSRPLALLVVAALVAAAVLVAAAEA. Residues 28-51 constitute a propeptide that is removed on maturation; the sequence is QQADGNKLEGLADALKYLQELDRY. Residue phenylalanine 60 is modified to Phenylalanine amide. Residues 64–92 constitute a propeptide that is removed on maturation; it reads AELRPDVVDDVIPEEMSADKFWRRFARRR.

This sequence belongs to the NPY family. As to expression, widely expressed in the nervous system. Expressed in corpora cardiaca, hypocerebral ganglion, frontal ganglion, protocerebrum, antennal lobe, tritocerebrum and thoracic ganglia. Not detected in corpora allata, pars intercerebralis, circumesophageal connectives, subesophageal ganglion, abdominal ganglion and abdominal perisympathetic organs.

The protein localises to the secreted. Its function is as follows. Accelerates ovarian maturation in females. The protein is Neuropeptide F of Locusta migratoria (Migratory locust).